A 217-amino-acid chain; its full sequence is Imidazole glycerol phosphate synthase subunit HisH (217 aa).

In terms of domain architecture, Glutamine amidotransferase type-1 spans 5–217 (RVGIINYGVG…LRLLANFLTL (213 aa)). Catalysis depends on cysteine 93, which acts as the Nucleophile. Active-site residues include histidine 199 and glutamate 201.

Heterodimer of HisH and HisF.

It localises to the cytoplasm. It catalyses the reaction 5-[(5-phospho-1-deoxy-D-ribulos-1-ylimino)methylamino]-1-(5-phospho-beta-D-ribosyl)imidazole-4-carboxamide + L-glutamine = D-erythro-1-(imidazol-4-yl)glycerol 3-phosphate + 5-amino-1-(5-phospho-beta-D-ribosyl)imidazole-4-carboxamide + L-glutamate + H(+). The catalysed reaction is L-glutamine + H2O = L-glutamate + NH4(+). It participates in amino-acid biosynthesis; L-histidine biosynthesis; L-histidine from 5-phospho-alpha-D-ribose 1-diphosphate: step 5/9. IGPS catalyzes the conversion of PRFAR and glutamine to IGP, AICAR and glutamate. The HisH subunit catalyzes the hydrolysis of glutamine to glutamate and ammonia as part of the synthesis of IGP and AICAR. The resulting ammonia molecule is channeled to the active site of HisF. This chain is Imidazole glycerol phosphate synthase subunit HisH, found in Helicobacter hepaticus (strain ATCC 51449 / 3B1).